Consider the following 637-residue polypeptide: Biosynthetic arginine decarboxylase (637 aa).

K101 is subject to N6-(pyridoxal phosphate)lysine. Position 286–296 (286–296 (FDVGGGLAVDY)) interacts with substrate.

It belongs to the Orn/Lys/Arg decarboxylase class-II family. SpeA subfamily. Mg(2+) serves as cofactor. Pyridoxal 5'-phosphate is required as a cofactor.

It catalyses the reaction L-arginine + H(+) = agmatine + CO2. It participates in amine and polyamine biosynthesis; agmatine biosynthesis; agmatine from L-arginine: step 1/1. In terms of biological role, catalyzes the biosynthesis of agmatine from arginine. In Shewanella putrefaciens (strain CN-32 / ATCC BAA-453), this protein is Biosynthetic arginine decarboxylase.